The primary structure comprises 177 residues: Peptide methionine sulfoxide reductase MsrA (177 aa).

Residue Cys-15 is part of the active site.

Belongs to the MsrA Met sulfoxide reductase family.

It carries out the reaction L-methionyl-[protein] + [thioredoxin]-disulfide + H2O = L-methionyl-(S)-S-oxide-[protein] + [thioredoxin]-dithiol. The catalysed reaction is [thioredoxin]-disulfide + L-methionine + H2O = L-methionine (S)-S-oxide + [thioredoxin]-dithiol. Has an important function as a repair enzyme for proteins that have been inactivated by oxidation. Catalyzes the reversible oxidation-reduction of methionine sulfoxide in proteins to methionine. The protein is Peptide methionine sulfoxide reductase MsrA of Listeria monocytogenes serotype 4b (strain CLIP80459).